Consider the following 1505-residue polypeptide: Actin cytoskeleton-regulatory complex protein PAN1 (1505 aa).

The tract at residues 1-30 is disordered; the sequence is MFNSYQATGMGYNPNQQQQQPPPPQQQQQL. The region spanning 85–174 is the EH 1 domain; the sequence is DQKKFEHLFR…QKWHNEVQSF (90 aa). The EF-hand 1 domain occupies 118–153; sequence LTPVVLAEIWTLSDIDKTGALLFPEFALSLHLCNMA. Polar residues-rich tracts occupy residues 364 to 393 and 403 to 413; these read ATGYQQSFNTGGLQANKTGPLQPNHTGYNF and ATGLQRQPTGV. 2 disordered regions span residues 364-416 and 422-441; these read ATGY…VLQQ and LQQQPTGYLQSQPTGRPGEW. Positions 492–581 constitute an EH 2 domain; the sequence is EKQIYDRLFQ…PELIPPADKT (90 aa). Residues 525–560 form the EF-hand 2 domain; the sequence is LGRQDLEAIWTLADTDDVGKLNKNQFAVAMHLIYRR. The segment covering 588–604 has biased composition (polar residues); that stretch reads SLKNSLKNGGAKQTRSK. The segment at 588–620 is disordered; that stretch reads SLKNSLKNGGAKQTRSKPMTKPDGSRFKNDDSD. The stretch at 677–752 forms a coiled coil; sequence RTSDREVDAL…LVKLQLKRED (76 aa). 2 disordered regions span residues 867–927 and 948–1505; these read EFAR…TYST and EKLG…GRVL. Polar residues predominate over residues 872 to 885; it reads ADNTTTARSSSAYA. Basic and acidic residues-rich tracts occupy residues 960 to 980, 1034 to 1050, and 1069 to 1079; these read KAAEKHDEIVSKPSPSREEPP, SQRENFRENKWDEEKQY, and SQEHIVKENAK. Residues 1086–1096 show a composition bias toward polar residues; sequence QAPTSNYSQQP. The span at 1109–1123 shows a compositional bias: basic and acidic residues; the sequence is RATETEQAESKKESE. Residues 1133–1175 are compositionally biased toward low complexity; the sequence is AAASTEPAQPAQPAQASQASKPAQPAQPANSTEPASASASEQP. Over residues 1193 to 1208 the composition is skewed to polar residues; it reads VDTQKISMQRNFQRGT. Positions 1216–1225 are enriched in acidic residues; it reads DSEEEDSEDE. Residues 1261 to 1280 are compositionally biased toward basic and acidic residues; it reads PSKDEKSIGAENASGHESKM. Polar residues predominate over residues 1283–1319; the sequence is ELSSSENTAAGVSQVNETPAQSSYEEPSLQEQSSYES. The segment covering 1321 to 1330 has biased composition (low complexity); that stretch reads AVPAAPSLPE. A compositionally biased stretch (pro residues) spans 1331-1453; sequence SVPPPAPAPE…SIPPPPPAPP (123 aa). Residues 1454–1472 are compositionally biased toward low complexity; that stretch reads LSSNDSSLASAAAPPAGGA. Residues 1474 to 1491 enclose the WH2 domain; the sequence is NIGALLGQITGGKSLKKV.

It belongs to the PAN1 family. As to quaternary structure, component of the PAN1 actin cytoskeleton-regulatory complex.

It is found in the cell membrane. It localises to the endosome membrane. The protein localises to the cytoplasm. Its subcellular location is the cytoskeleton. The protein resides in the actin patch. Component of the PAN1 actin cytoskeleton-regulatory complex required for the internalization of endosomes during actin-coupled endocytosis. The complex links the site of endocytosis to the cell membrane-associated actin cytoskeleton. Mediates uptake of external molecules and vacuolar degradation of plasma membrane proteins. Plays a role in the proper organization of the cell membrane-associated actin cytoskeleton and promotes its destabilization. The sequence is that of Actin cytoskeleton-regulatory complex protein PAN1 (PAN1) from Lodderomyces elongisporus (strain ATCC 11503 / CBS 2605 / JCM 1781 / NBRC 1676 / NRRL YB-4239) (Yeast).